Here is a 101-residue protein sequence, read N- to C-terminus: UPF0235 protein MmarC5_0538 (101 aa).

Belongs to the UPF0235 family.

In Methanococcus maripaludis (strain C5 / ATCC BAA-1333), this protein is UPF0235 protein MmarC5_0538.